A 223-amino-acid chain; its full sequence is METVLSLLNEFGFERTVEPLSDPIVVHAVPGSGKTTLIKQALIRNNNIEAVTFGVPEKANIHGTYIKKARQGQRGRGNYSILDEYLSGEYSTGFNCLFSDPYQNHGDCLRAHFIGRCSHRFGRQTVQILRDLGYNIASSKEDIVEKKNIFQLIEPEGVIICLEKGVEDFLKWHSVEYKFPCQVRGATFDIVTFIHEKPLEELVGPDLFVALTRHRSKLVLVSN.

Residues 1 to 136 enclose the (+)RNA virus helicase ATP-binding domain; that stretch reads METVLSLLNE…QILRDLGYNI (136 aa). The (+)RNA virus helicase C-terminal domain occupies 137–223; sequence ASSKEDIVEK…HRSKLVLVSN (87 aa).

Belongs to the Tymovirales TGBp1 protein family. In terms of assembly, homodimer and homooligomer. Interacts with capsid protein. Interacts with host AGO1; this interaction targets the host protein for degradation, thereby suppressing the antiviral RNA silencing.

The protein resides in the host cytoplasm. Transports viral genome to neighboring plant cells directly through plasmosdesmata, without any budding. The movement protein allows efficient cell to cell propagation, by bypassing the host cell wall barrier. Increases plasmodesma size exclusion limit. Acts as a suppressor of RNA-mediated gene silencing, also known as post-transcriptional gene silencing (PTGS), a mechanism of plant viral defense that limits the accumulation of viral RNAs. The polypeptide is Movement and silencing protein TGBp1 (Crataegus (hawthorn)).